The following is a 326-amino-acid chain: Tetraacyldisaccharide 4'-kinase (326 aa).

Residue Ser-53–Thr-60 coordinates ATP.

Belongs to the LpxK family.

The catalysed reaction is a lipid A disaccharide + ATP = a lipid IVA + ADP + H(+). It functions in the pathway glycolipid biosynthesis; lipid IV(A) biosynthesis; lipid IV(A) from (3R)-3-hydroxytetradecanoyl-[acyl-carrier-protein] and UDP-N-acetyl-alpha-D-glucosamine: step 6/6. Transfers the gamma-phosphate of ATP to the 4'-position of a tetraacyldisaccharide 1-phosphate intermediate (termed DS-1-P) to form tetraacyldisaccharide 1,4'-bis-phosphate (lipid IVA). The protein is Tetraacyldisaccharide 4'-kinase of Actinobacillus pleuropneumoniae serotype 5b (strain L20).